A 525-amino-acid polypeptide reads, in one-letter code: GMP synthase [glutamine-hydrolyzing] (525 aa).

The region spanning 9–207 (RILILDFGSQ…VLEISGCEAL (199 aa)) is the Glutamine amidotransferase type-1 domain. The active-site Nucleophile is the C86. Catalysis depends on residues H181 and E183. Residues 208 to 400 (WTPANIVEDA…LGLPYDMVYR (193 aa)) enclose the GMPS ATP-PPase domain. Residue 235-241 (SGGVDSS) participates in ATP binding.

In terms of assembly, homodimer.

The enzyme catalyses XMP + L-glutamine + ATP + H2O = GMP + L-glutamate + AMP + diphosphate + 2 H(+). The protein operates within purine metabolism; GMP biosynthesis; GMP from XMP (L-Gln route): step 1/1. Functionally, catalyzes the synthesis of GMP from XMP. This is GMP synthase [glutamine-hydrolyzing] from Ectopseudomonas mendocina (strain ymp) (Pseudomonas mendocina).